A 114-amino-acid chain; its full sequence is Large ribosomal subunit protein uL22 (114 aa).

The protein belongs to the universal ribosomal protein uL22 family. As to quaternary structure, part of the 50S ribosomal subunit.

Functionally, this protein binds specifically to 23S rRNA; its binding is stimulated by other ribosomal proteins, e.g. L4, L17, and L20. It is important during the early stages of 50S assembly. It makes multiple contacts with different domains of the 23S rRNA in the assembled 50S subunit and ribosome. Its function is as follows. The globular domain of the protein is located near the polypeptide exit tunnel on the outside of the subunit, while an extended beta-hairpin is found that lines the wall of the exit tunnel in the center of the 70S ribosome. The protein is Large ribosomal subunit protein uL22 of Streptococcus agalactiae serotype Ia (strain ATCC 27591 / A909 / CDC SS700).